The primary structure comprises 453 residues: Major fimbrium subunit FimC (453 aa).

A signal peptide spans 1 to 28; sequence MKMKYFHHPSGLLPRLLLLLLLTMGAVA. A lipid anchor (N-palmitoyl cysteine) is attached at Cys29. The S-diacylglycerol cysteine moiety is linked to residue Cys29. Positions 29 to 56 are excised as a propeptide; that stretch reads CTKEDNPDQPTSDEVATVKMSLDDVEMR.

This sequence belongs to the bacteroidetes fimbrillin superfamily. FimA/Mfa1 family. Fimbriae are composed of a major, structural subunit and the minor components FimC, FimD and FimE. Identified in a complex composed of FimC, FimD and FimE (in vitro). The complex interacts with host extracellular matrix proteins, including fibronectin and type I collagen. Interacts with host CXCR4.

It localises to the fimbrium. Its subcellular location is the cell outer membrane. Minor component of fimbriae. These long, filamentous pili are attached to the cell surface; they mediate biofilm formation, adhesion onto host cells and onto other bacteria that are part of the oral microbiome. They play an important role in invasion of periodontal tissues and are major virulence factors. FimC, FimD and FimE contribute to interaction with host CXCR4 and thereby down-regulate the TLR2-mediated host immune response. The polypeptide is Major fimbrium subunit FimC (Porphyromonas gingivalis (strain ATCC 33277 / DSM 20709 / CIP 103683 / JCM 12257 / NCTC 11834 / 2561)).